The primary structure comprises 380 residues: Cystathionine beta-lyase (380 aa).

The residue at position 196 (Lys196) is an N6-(pyridoxal phosphate)lysine.

Belongs to the trans-sulfuration enzymes family. It depends on pyridoxal 5'-phosphate as a cofactor.

The protein resides in the cytoplasm. The enzyme catalyses L,L-cystathionine + H2O = L-homocysteine + pyruvate + NH4(+). It carries out the reaction an S-substituted L-cysteine + H2O = a thiol + pyruvate + NH4(+). Its pathway is amino-acid biosynthesis; L-methionine biosynthesis via de novo pathway; L-homocysteine from L-cystathionine: step 1/1. Functionally, the enzymatic degradation of amino acids in cheese is believed to generate aroma compounds and therefore to be essential for flavor development. Cystathionine beta-lyase (CBL) can convert cystathionine to homocysteine but is also able to catalyze an alpha, gamma elimination. With methionine as a substrate, it produces volatile sulfur compounds which are important for flavor formation in Gouda cheese. The chain is Cystathionine beta-lyase (metC) from Lactococcus lactis subsp. lactis (strain IL1403) (Streptococcus lactis).